The primary structure comprises 28 residues: Heat shock protein 81 (28 aa).

2 residues coordinate ATP: asparagine 5 and aspartate 21.

It belongs to the heat shock protein 90 family. Homodimer.

The protein localises to the cytoplasm. Putative molecular chaperone that may promote the maturation, structural maintenance and proper regulation of specific target proteins. This Pseudotsuga menziesii (Douglas-fir) protein is Heat shock protein 81.